The sequence spans 706 residues: Signal transducer and activator of transcription 1 (706 aa).

The SH2 domain occupies 477–574; sequence WCIGFISKND…EEMLRFFESE (98 aa).

Belongs to the transcription factor STAT family. In terms of assembly, forms a homodimer or a heterodimer with a related family member. In terms of tissue distribution, expressed in adult and larval pharynx, head ganglia, tail ganglia, ventral nerve cord and body muscles.

It is found in the cytoplasm. The protein resides in the nucleus. In terms of biological role, carries out a dual function: signal transduction and activation of transcription. Activated STAT proteins play a role in repression of dauer formation. Neuronal expression is held in check by negative signals through the TGF-beta pathway that target the daf-3 transcription factor. The polypeptide is Signal transducer and activator of transcription 1 (Caenorhabditis elegans).